A 230-amino-acid chain; its full sequence is MALSIFKDLPGEHPRNLIPSLCRQFYHLGWVTGTGGGMSIKYNNEIYIAPSGVQKERMQPEDLFVQDIDGKDLQLPPEIKGLSKSQCTPLFMLAYRHRNAGAVIHTHSQHAVMATLLWPGKTFRCTHLEMIKGVYDEADKRYLRYDEQLVVPIIENTPFERDLADSMYAAMMEYPGCSAVLVRRHGVYVWGQTWEKTKTMSECYDYLFSIAVQMKQAGLDPEKFENALQA.

Cys87 serves as a coordination point for substrate. 2 residues coordinate Zn(2+): His105 and His107. Residue Glu129 is the Proton donor/acceptor of the active site. His185 lines the Zn(2+) pocket.

It belongs to the aldolase class II family. MtnB subfamily. Zn(2+) serves as cofactor.

The protein resides in the cytoplasm. The enzyme catalyses 5-(methylsulfanyl)-D-ribulose 1-phosphate = 5-methylsulfanyl-2,3-dioxopentyl phosphate + H2O. It functions in the pathway amino-acid biosynthesis; L-methionine biosynthesis via salvage pathway; L-methionine from S-methyl-5-thio-alpha-D-ribose 1-phosphate: step 2/6. Its function is as follows. Catalyzes the dehydration of methylthioribulose-1-phosphate (MTRu-1-P) into 2,3-diketo-5-methylthiopentyl-1-phosphate (DK-MTP-1-P). This chain is Probable methylthioribulose-1-phosphate dehydratase, found in Drosophila virilis (Fruit fly).